Consider the following 900-residue polypeptide: Alanine--tRNA ligase (900 aa).

Zn(2+) contacts are provided by His567, His571, Cys671, and His675.

Belongs to the class-II aminoacyl-tRNA synthetase family. It depends on Zn(2+) as a cofactor.

The protein localises to the cytoplasm. It catalyses the reaction tRNA(Ala) + L-alanine + ATP = L-alanyl-tRNA(Ala) + AMP + diphosphate. Its function is as follows. Catalyzes the attachment of alanine to tRNA(Ala) in a two-step reaction: alanine is first activated by ATP to form Ala-AMP and then transferred to the acceptor end of tRNA(Ala). Also edits incorrectly charged Ser-tRNA(Ala) and Gly-tRNA(Ala) via its editing domain. This Mycoplasma pneumoniae (strain ATCC 29342 / M129 / Subtype 1) (Mycoplasmoides pneumoniae) protein is Alanine--tRNA ligase.